The sequence spans 1242 residues: MDELQKLEYLSLVSKICTELDNHLGINDKDLAEFIIDLENKNRTYDTFRKALLDNGAEFPDSLVQNLQRIINLMRPSRPGGASQEKTVGDKKEDKKSQLLKMFPGLALPNDTYSKKEESDDDEKVKAKPEKHSETHKKTDMSDVDAAMMELEALAPGEGATLVRPHKEVSSRDRHKRRSRDRDTKRRSRSREDRHSDRRRSRSRDKERRRRSRSRDNRRRSRSREDRDRDRDRRHKSSSSRDHHERRRRSRSRSTERRDRRDRSRDCSEKMPPPSAAMTDDPEAGKIYSGKIANIVPFGCFVQLFGLRKRWEGLVHISQLRAEGRVTDVTEVVTRNQTVKVKVMSITGQKVSLSMKEVDQDSGKDLNPLSHAPEDDESLRDRNPDGPFSSSTSMLNLQGNGMEGDEHESRKRVTRISSPERWEIKQMISSGVLDRSEMPDFDEETGLLPKDEDDEADIEIEIVEEEPPFLSGHGRALHDLSPVRIVKNPDGSLAQAAMMQSALSKERREQKMLQREQEIEAMPTSLNKNWIDPLPEDESRSLAANMRGMAAAPPEVPEWKKHVIGGKKSSFGKKTDLTLVEQRQSLPIYKLRDDLIKAVTDNQILIVIGETGSGKTTQITQYLGECGFTARGKIGCTQPRRVAAMSVAKRVAEEYGCRLGQEVGYTIRFEDCTSPETIIKYMTDGMLLRECLMEAELKSYSVIMLDEAHERTIHTDVLFGLLKTAVQKRPELKLIVTSATLDAVKFSQYFFKAPIFTIPGRTFPVEVLYTKEPETDYLDASLITVMQIHLREPPGDILLFLTGQEEIDTACEILYERMKSLGPDVPELIILPVYSALPSEMQTRIFDPAPAGSRKVVIATNIAETSLTIDGIFYVVDPGFVKQKVYNSKTGMDSLVVTPISQAAAKQRAGRAGRTGPGKTYRLYTERAYRDEMLPTPVPEIQRTNLATTVLQLKTMGINDLLHFDFMDAPPVESLVMALEQLHSLSALDDEGLLTRLGRRMAEFPLEPNLSKMLIMSVALQCSDEILTIVSMLSVQNVFYRPKDKQALADQKKAKFNQAEGDHLTLLAVYNSWKNNKFSNAWCYENFVQIRTLKRSQDVRKQLLGIMDRHKLDVVSAGKNSVRIQKAICSGFFRNAAKKDPQEGYRTLVDSQVVYIHPSSALFNRQPEWVIYHELVQTTKEYMREVTTIDPKWLVEFAPSFFRFSDPTKLSKFKKNQRLEPLYNKYEEPNAWRISRVRRRRN.

2 disordered regions span residues 75–283 (RPSR…DDPE) and 354–449 (SMKE…GLLP). Composition is skewed to basic and acidic residues over residues 87-97 (TVGDKKEDKKS), 113-141 (YSKKEESDDDEKVKAKPEKHSETHKKTDM), and 180-196 (RDRDTKRRSRSREDRHS). Composition is skewed to basic residues over residues 197–222 (DRRRSRSRDKERRRRSRSRDNRRRSR) and 232–252 (DRRHKSSSSRDHHERRRRSRS). Positions 253-269 (RSTERRDRRDRSRDCSE) are enriched in basic and acidic residues. In terms of domain architecture, S1 motif spans 285-356 (GKIYSGKIAN…TGQKVSLSMK (72 aa)). A compositionally biased stretch (polar residues) spans 388–399 (FSSSTSMLNLQG). Residues 439-449 (PDFDEETGLLP) are compositionally biased toward acidic residues. A Helicase ATP-binding domain is found at 596–759 (IKAVTDNQIL…FFKAPIFTIP (164 aa)). Position 609–616 (609–616 (GETGSGKT)) interacts with ATP. A DEAH box motif is present at residues 706–709 (DEAH). Residues 777 to 957 (YLDASLITVM…TTVLQLKTMG (181 aa)) enclose the Helicase C-terminal domain.

The protein belongs to the DEAD box helicase family. DEAH subfamily. DDX8/PRP22 sub-subfamily. Identified in the spliceosome C complex.

It localises to the nucleus. The catalysed reaction is ATP + H2O = ADP + phosphate + H(+). Functionally, involved in pre-mRNA splicing as component of the spliceosome. Facilitates nuclear export of spliced mRNA by releasing the RNA from the spliceosome. Before and after egg-chamber formation, required for nurse-cell chromatin dispersal (NCCD) probably by playing a role in spliceosome localization to chromatin/interchromatin spaces. This chain is ATP-dependent RNA helicase DHX8, found in Drosophila melanogaster (Fruit fly).